We begin with the raw amino-acid sequence, 166 residues long: Transcriptional repressor NrdR (166 aa).

Residues 3-34 (CPFCHFVETDVIDTRKLYEGEVIRRRRRCRAC) fold into a zinc finger. One can recognise an ATP-cone domain in the interval 49-139 (LMVVKKDGTR…VYRAFTDIGK (91 aa)).

It belongs to the NrdR family. Zn(2+) serves as cofactor.

Negatively regulates transcription of bacterial ribonucleotide reductase nrd genes and operons by binding to NrdR-boxes. The chain is Transcriptional repressor NrdR from Chloroflexus aurantiacus (strain ATCC 29364 / DSM 637 / Y-400-fl).